Consider the following 118-residue polypeptide: UPF0102 protein CMM_1377 (118 aa).

This sequence belongs to the UPF0102 family.

This chain is UPF0102 protein CMM_1377, found in Clavibacter michiganensis subsp. michiganensis (strain NCPPB 382).